A 321-amino-acid polypeptide reads, in one-letter code: Corticotropin-releasing factor-binding protein (321 aa).

The first 21 residues, 1 to 21 (MTPASRPDWCLILLFLAVLRG), serve as a signal peptide directing secretion. 5 disulfide bridges follow: cysteine 59/cysteine 80, cysteine 103/cysteine 140, cysteine 182/cysteine 204, cysteine 237/cysteine 264, and cysteine 277/cysteine 317. N-linked (GlcNAc...) asparagine glycosylation is present at asparagine 203.

Belongs to the CRF-binding protein family.

The protein localises to the secreted. Its function is as follows. Binds CRF and inactivates it. May prevent inappropriate pituitary-adrenal stimulation in pregnancy. The chain is Corticotropin-releasing factor-binding protein (crhbp) from Xenopus laevis (African clawed frog).